The sequence spans 149 residues: Arginine repressor (149 aa).

The protein belongs to the ArgR family.

Its subcellular location is the cytoplasm. Its pathway is amino-acid biosynthesis; L-arginine biosynthesis [regulation]. In terms of biological role, regulates arginine biosynthesis genes. This Alkaliphilus oremlandii (strain OhILAs) (Clostridium oremlandii (strain OhILAs)) protein is Arginine repressor.